The sequence spans 86 residues: Large ribosomal subunit protein bL31 (86 aa).

A disordered region spans residues 66-86 (GMGSANSATSKEQKADKDSQK). The span at 76 to 86 (KEQKADKDSQK) shows a compositional bias: basic and acidic residues.

It belongs to the bacterial ribosomal protein bL31 family. Type A subfamily. Part of the 50S ribosomal subunit.

Functionally, binds the 23S rRNA. The chain is Large ribosomal subunit protein bL31 from Prochlorococcus marinus (strain MIT 9215).